Consider the following 491-residue polypeptide: Glutamyl-tRNA(Gln) amidotransferase subunit A (491 aa).

Catalysis depends on charge relay system residues Lys81 and Ser156. The active-site Acyl-ester intermediate is Ser180.

This sequence belongs to the amidase family. GatA subfamily. In terms of assembly, heterotrimer of A, B and C subunits.

It catalyses the reaction L-glutamyl-tRNA(Gln) + L-glutamine + ATP + H2O = L-glutaminyl-tRNA(Gln) + L-glutamate + ADP + phosphate + H(+). Its function is as follows. Allows the formation of correctly charged Gln-tRNA(Gln) through the transamidation of misacylated Glu-tRNA(Gln) in organisms which lack glutaminyl-tRNA synthetase. The reaction takes place in the presence of glutamine and ATP through an activated gamma-phospho-Glu-tRNA(Gln). In Alcanivorax borkumensis (strain ATCC 700651 / DSM 11573 / NCIMB 13689 / SK2), this protein is Glutamyl-tRNA(Gln) amidotransferase subunit A.